A 347-amino-acid chain; its full sequence is Probable magnetosome protein Mms36 (347 aa).

A helical transmembrane segment spans residues 25-45; sequence VLVLYLAIAVVVAVLAWPWLA.

The protein localises to the magnetosome membrane. Its function is as follows. The 4 genes of this operon collectively influence magnetosome size and number. The protein is Probable magnetosome protein Mms36 of Magnetospirillum gryphiswaldense (strain DSM 6361 / JCM 21280 / NBRC 15271 / MSR-1).